A 464-amino-acid chain; its full sequence is Nuclear distribution protein nudF 2 (464 aa).

Positions 9–41 constitute a LisH domain; sequence QAAELNKSIIAYLSAHGLAETLAAFRKESDFPD. Positions 63–88 form a coiled coil; it reads NSTLMKKLLALESHNKALRNELNSTR. WD repeat units follow at residues 112–151, 154–195, 199–238, 241–280, 285–343, 344–383, 388–424, and 426–464; these read SHRD…LERT, GHTM…KNVK, GHDH…RVKT, DHTG…PICK, GHEN…MTLT, GHAS…RCVK, AHDG…AELP, and SKLD…RSHK.

This sequence belongs to the WD repeat LIS1/nudF family. In terms of assembly, self-associates. Interacts with nudE and dynein.

The protein localises to the cytoplasm. The protein resides in the cytoskeleton. It localises to the spindle pole. Functionally, positively regulates the activity of the minus-end directed microtubule motor protein dynein. May enhance dynein-mediated microtubule sliding by targeting dynein to the microtubule plus end. Required for nuclear migration during vegetative growth as well as development. Required for retrograde early endosome (EE) transport from the hyphal tip. Required for localization of dynein to the mitotic spindle poles. Recruits additional proteins to the dynein complex at SPBs. The chain is Nuclear distribution protein nudF 2 from Penicillium rubens (strain ATCC 28089 / DSM 1075 / NRRL 1951 / Wisconsin 54-1255) (Penicillium chrysogenum).